A 105-amino-acid polypeptide reads, in one-letter code: Mini zinc finger protein 2 (105 aa).

The segment at 1-29 is disordered; sequence MGPQQDRSAAKPYANGSTAAAAAAGRKEN. The segment at 35–84 adopts a ZF-HD dimerization-type; degenerate zinc-finger fold; the sequence is YRECQRNHAASIGGHAVDGCREFMASGADGTAAALLCAACGCHQSFHRRE.

In terms of assembly, homo- and heterodimers.

The protein localises to the cytoplasm. Inhibits zinc finger homeodomain (ZHD) transcription factors, by interacting with them to prevent both their nuclear localization and their DNA-binding properties. The protein is Mini zinc finger protein 2 (MIF2) of Oryza sativa subsp. indica (Rice).